Here is a 276-residue protein sequence, read N- to C-terminus: ATP synthase subunit a (276 aa).

Transmembrane regions (helical) follow at residues 47 to 67 (WHIDSLLFSVGLGVLFLWLFY), 107 to 127 (IAPLGLTIFVWVFLMNLMDLI), 152 to 172 (DLNVTLGLALSVFVLIVFYSI), 188 to 208 (PFNHWALIPINFVLETVTLIA), 226 to 246 (LIFILIALMPWWAQFALSVPW), and 247 to 267 (AIFHILVIVLQAFIFMMLTIV).

Belongs to the ATPase A chain family. F-type ATPases have 2 components, CF(1) - the catalytic core - and CF(0) - the membrane proton channel. CF(1) has five subunits: alpha(3), beta(3), gamma(1), delta(1), epsilon(1). CF(0) has three main subunits: a(1), b(2) and c(9-12). The alpha and beta chains form an alternating ring which encloses part of the gamma chain. CF(1) is attached to CF(0) by a central stalk formed by the gamma and epsilon chains, while a peripheral stalk is formed by the delta and b chains.

The protein localises to the cell inner membrane. In terms of biological role, key component of the proton channel; it plays a direct role in the translocation of protons across the membrane. The protein is ATP synthase subunit a of Shewanella halifaxensis (strain HAW-EB4).